Here is a 139-residue protein sequence, read N- to C-terminus: Nucleoside diphosphate kinase (139 aa).

Lys10, Phe58, Arg86, Thr92, Arg103, and Asn113 together coordinate ATP. His116 (pros-phosphohistidine intermediate) is an active-site residue.

The protein belongs to the NDK family. Homotetramer. The cofactor is Mg(2+).

The protein localises to the cytoplasm. It catalyses the reaction a 2'-deoxyribonucleoside 5'-diphosphate + ATP = a 2'-deoxyribonucleoside 5'-triphosphate + ADP. The enzyme catalyses a ribonucleoside 5'-diphosphate + ATP = a ribonucleoside 5'-triphosphate + ADP. Its function is as follows. Major role in the synthesis of nucleoside triphosphates other than ATP. The ATP gamma phosphate is transferred to the NDP beta phosphate via a ping-pong mechanism, using a phosphorylated active-site intermediate. The chain is Nucleoside diphosphate kinase from Phenylobacterium zucineum (strain HLK1).